The chain runs to 1066 residues: Carbamoyl phosphate synthase large chain (1066 aa).

The segment at 1–401 is carboxyphosphate synthetic domain; it reads MPKNNNIKKV…ALMKAVRSLE (401 aa). The ATP site is built by Arg-129, Arg-169, Gly-175, Gly-176, Arg-208, Ile-210, Glu-215, Gly-241, Val-242, His-243, Gln-284, and Glu-298. The 195-residue stretch at 133–327 folds into the ATP-grasp 1 domain; it reads KNTMEKIGEP…IAKVAAKIAL (195 aa). 3 residues coordinate Mg(2+): Gln-284, Glu-298, and Asn-300. The Mn(2+) site is built by Gln-284, Glu-298, and Asn-300. The segment at 402 to 547 is oligomerization domain; that stretch reads QNIYSMNYGD…YSCFDSENEV (146 aa). The tract at residues 548-931 is carbamoyl phosphate synthetic domain; sequence DATKTKKKVL…ALYKAFLGAG (384 aa). Residues 673-863 form the ATP-grasp 2 domain; the sequence is DEILEKCCIP…IVSLASKAVL (191 aa). Residues Arg-709, Lys-748, Leu-750, Glu-754, Gly-779, Ile-780, His-781, Ser-782, Gln-822, and Glu-834 each coordinate ATP. Mg(2+)-binding residues include Gln-822, Glu-834, and Asn-836. The Mn(2+) site is built by Gln-822, Glu-834, and Asn-836. In terms of domain architecture, MGS-like spans 932-1066; the sequence is INLPKHKKMI…ELSLIDIARI (135 aa). Residues 932–1066 are allosteric domain; that stretch reads INLPKHKKMI…ELSLIDIARI (135 aa).

Belongs to the CarB family. In terms of assembly, composed of two chains; the small (or glutamine) chain promotes the hydrolysis of glutamine to ammonia, which is used by the large (or ammonia) chain to synthesize carbamoyl phosphate. Tetramer of heterodimers (alpha,beta)4. The cofactor is Mg(2+). It depends on Mn(2+) as a cofactor.

It catalyses the reaction hydrogencarbonate + L-glutamine + 2 ATP + H2O = carbamoyl phosphate + L-glutamate + 2 ADP + phosphate + 2 H(+). The catalysed reaction is hydrogencarbonate + NH4(+) + 2 ATP = carbamoyl phosphate + 2 ADP + phosphate + 2 H(+). It participates in amino-acid biosynthesis; L-arginine biosynthesis; carbamoyl phosphate from bicarbonate: step 1/1. Its pathway is pyrimidine metabolism; UMP biosynthesis via de novo pathway; (S)-dihydroorotate from bicarbonate: step 1/3. Large subunit of the glutamine-dependent carbamoyl phosphate synthetase (CPSase). CPSase catalyzes the formation of carbamoyl phosphate from the ammonia moiety of glutamine, carbonate, and phosphate donated by ATP, constituting the first step of 2 biosynthetic pathways, one leading to arginine and/or urea and the other to pyrimidine nucleotides. The large subunit (synthetase) binds the substrates ammonia (free or transferred from glutamine from the small subunit), hydrogencarbonate and ATP and carries out an ATP-coupled ligase reaction, activating hydrogencarbonate by forming carboxy phosphate which reacts with ammonia to form carbamoyl phosphate. The polypeptide is Carbamoyl phosphate synthase large chain (Lachnoclostridium phytofermentans (strain ATCC 700394 / DSM 18823 / ISDg) (Clostridium phytofermentans)).